The sequence spans 506 residues: NAD(P)H-quinone oxidoreductase subunit 2, chloroplastic (506 aa).

Transmembrane regions (helical) follow at residues L15–Y35, C39–G59, L84–I104, A113–G133, L137–Y157, L172–I192, C217–F237, P249–V269, W283–V303, I339–F359, A382–F402, S418–V438, and V471–V491.

The protein belongs to the complex I subunit 2 family. In terms of assembly, NDH is composed of at least 16 different subunits, 5 of which are encoded in the nucleus.

It is found in the plastid. The protein resides in the chloroplast thylakoid membrane. It carries out the reaction a plastoquinone + NADH + (n+1) H(+)(in) = a plastoquinol + NAD(+) + n H(+)(out). It catalyses the reaction a plastoquinone + NADPH + (n+1) H(+)(in) = a plastoquinol + NADP(+) + n H(+)(out). Its function is as follows. NDH shuttles electrons from NAD(P)H:plastoquinone, via FMN and iron-sulfur (Fe-S) centers, to quinones in the photosynthetic chain and possibly in a chloroplast respiratory chain. The immediate electron acceptor for the enzyme in this species is believed to be plastoquinone. Couples the redox reaction to proton translocation, and thus conserves the redox energy in a proton gradient. This Nephroselmis olivacea (Green alga) protein is NAD(P)H-quinone oxidoreductase subunit 2, chloroplastic.